The sequence spans 467 residues: UDP-glycosyltransferase 90A2 (467 aa).

UDP-alpha-D-glucose is bound by residues serine 289, 341–343 (VDQ), 358–366 (HCGWNSLTE), and 380–383 (AAEQ).

This sequence belongs to the UDP-glycosyltransferase family.

The polypeptide is UDP-glycosyltransferase 90A2 (UGT90A2) (Arabidopsis thaliana (Mouse-ear cress)).